Reading from the N-terminus, the 117-residue chain is MVVKLVVAVRKDLDMGKGKIAAQVAHAAVSCAIKAMKEKKKIFDEWMDEGQKKIVVKVPNVDEIYIIKKKADSMGIINEVIQDRGYTQVEPGTVTCIGLGPDYEVYLDDITGKYKLL.

It belongs to the PTH2 family.

The protein resides in the cytoplasm. It carries out the reaction an N-acyl-L-alpha-aminoacyl-tRNA + H2O = an N-acyl-L-amino acid + a tRNA + H(+). The natural substrate for this enzyme may be peptidyl-tRNAs which drop off the ribosome during protein synthesis. The polypeptide is Peptidyl-tRNA hydrolase (Thermoplasma volcanium (strain ATCC 51530 / DSM 4299 / JCM 9571 / NBRC 15438 / GSS1)).